We begin with the raw amino-acid sequence, 431 residues long: Enolase (431 aa).

Gln-163 serves as a coordination point for (2R)-2-phosphoglycerate. The active-site Proton donor is Glu-205. 3 residues coordinate Mg(2+): Asp-242, Glu-288, and Asp-315. Residues Lys-340, Arg-369, Ser-370, and Lys-391 each contribute to the (2R)-2-phosphoglycerate site. Lys-340 (proton acceptor) is an active-site residue.

This sequence belongs to the enolase family. Mg(2+) is required as a cofactor.

Its subcellular location is the cytoplasm. The protein resides in the secreted. It localises to the cell surface. The catalysed reaction is (2R)-2-phosphoglycerate = phosphoenolpyruvate + H2O. The protein operates within carbohydrate degradation; glycolysis; pyruvate from D-glyceraldehyde 3-phosphate: step 4/5. Catalyzes the reversible conversion of 2-phosphoglycerate (2-PG) into phosphoenolpyruvate (PEP). It is essential for the degradation of carbohydrates via glycolysis. In Bacillus mycoides (strain KBAB4) (Bacillus weihenstephanensis), this protein is Enolase.